Here is a 794-residue protein sequence, read N- to C-terminus: Potassium transporter 2 (794 aa).

Residues 1–21 (MDLNLGKCCGSRSSKKESWRS) lie on the Cytoplasmic side of the membrane. Residues 22–42 (VLLLAYQSLGVVYGDLSISPL) traverse the membrane as a helical segment. The Extracellular portion of the chain corresponds to 43-64 (YVFKSTFAEDIQHSETNEEIYG). The chain crosses the membrane as a helical span at residues 65–85 (VMSFVFWTLTLVPLLKYVFIV). Over 86 to 153 (LRADDNGEGG…EKHKWLHTAL (68 aa)) the chain is Cytoplasmic. Residues 154 to 174 (LLLVLLGTCMVIGDGLLTPAI) traverse the membrane as a helical segment. Over 175-193 (SVFSAVSGLELNMSKEHHQ) the chain is Extracellular. The chain crosses the membrane as a helical span at residues 194-214 (YAVIPITCFILVCLFSLQHFG). At 215–217 (THR) the chain is on the cytoplasmic side. Residues 218–238 (VGFVFAPIVLTWLLCISGIGL) form a helical membrane-spanning segment. Topologically, residues 239-265 (YNIIQWNPHIYKALSPTYMFMFLRKTR) are extracellular. Residues 266–286 (VSGWMSLGGILLCITGAEAMF) form a helical membrane-spanning segment. Topologically, residues 287–294 (ADLGHFNY) are cytoplasmic. A helical transmembrane segment spans residues 295–315 (AAIQIAFTFLVYPALILAYMG). The Extracellular segment spans residues 316–339 (QAAYLSRHHHSAHAIGFYVSVPKC). The chain crosses the membrane as a helical span at residues 340-360 (LHWPVLAVAILASVVGSQAII). Residues 361–391 (SGTFSIINQSQSLGCFPRVKVIHTSDKMHGQ) lie on the Cytoplasmic side of the membrane. A helical membrane pass occupies residues 392–412 (IYIPEINWMLMILCIAVTIGF). Residues 413-417 (RDVKH) are Extracellular-facing. 2 helical membrane passes run 418 to 438 (LGNA…CLTS) and 439 to 459 (LVIV…LLFF). The Extracellular segment spans residues 460–476 (GSIELLYFSASLTKFRE). Residues 477–497 (GAWLPILLSLIFMIIMFVWHY) form a helical membrane-spanning segment. At 498–794 (TTIKKYEFDL…LLEVGMVYVV (297 aa)) the chain is on the cytoplasmic side.

This sequence belongs to the HAK/KUP transporter (TC 2.A.72.3) family. As to expression, slightly detected in roots, stems, leaves and flowers of mature plants and in potassium-starved plants.

It is found in the cell membrane. In terms of biological role, low-affinity potassium transporter. Could mediate the potassium-dependent cell expansion in growing tissues. This Arabidopsis thaliana (Mouse-ear cress) protein is Potassium transporter 2 (POT2).